The following is a 517-amino-acid chain: Ribonuclease Y (517 aa).

The chain crosses the membrane as a helical span at residues 4-24 (LIYIVILFVGIAAGAFFGISV). Residues 207-267 (TISTVALPND…LRREVARRTI (61 aa)) enclose the KH domain. An HD domain is found at 333–426 (VLAHSVEVAQ…VAAADAISAA (94 aa)).

The protein belongs to the RNase Y family.

It is found in the cell membrane. Its function is as follows. Endoribonuclease that initiates mRNA decay. The sequence is that of Ribonuclease Y from Fervidobacterium nodosum (strain ATCC 35602 / DSM 5306 / Rt17-B1).